We begin with the raw amino-acid sequence, 88 residues long: MRLDKFLKVSRLIKRRTLAKEVCEQGRITVNGNVAKAGTVVKEGDELVIRFGQKLVTVEITNVKETVRKEEASTLYEVKKEEPISKSE.

One can recognise an S4 RNA-binding domain in the interval 1-67 (MRLDKFLKVS…VEITNVKETV (67 aa)).

The protein belongs to the RqcP family. Associates with stalled 50S ribosomal subunits. Binds to RqcH, 23S rRNA and the P-site tRNA. Does not require RqcH for association with 50S subunits.

Its function is as follows. Key component of the ribosome quality control system (RQC), a ribosome-associated complex that mediates the extraction of incompletely synthesized nascent chains from stalled ribosomes and their subsequent degradation. RqcH recruits Ala-charged tRNA, and with RqcP directs the elongation of stalled nascent chains on 50S ribosomal subunits, leading to non-templated C-terminal alanine extensions (Ala tail). The Ala tail promotes nascent chain degradation. RqcP is associated with the translocation-like movement of the peptidyl-tRNA from the A-site into the P-site. This Halalkalibacterium halodurans (strain ATCC BAA-125 / DSM 18197 / FERM 7344 / JCM 9153 / C-125) (Bacillus halodurans) protein is RQC P-site tRNA stabilizing factor.